Here is a 1115-residue protein sequence, read N- to C-terminus: MENYGKAVTFSSSATSNLNTGKAIAQYNADAKLMAEFEQSRESGKSFDYSRSVIHAPQNVTEEEMTAYLSRIQRGGLIQPFGCMLAIEEPSFKIVGFSENCFDLLGLKSGVEPPERMSLIGIDARTLFTLSSRASLAKAVASREISLLNPIWVHSKINQKPFYAVLHRIDVGIVIDLEPANSADPALLLAGAVQSQKLAVRAISRLQSLPGGDIGTLCDTVVEDVQKLTGYDRVMVYKFHDDSHGEVVSEIRRSDLEPYLGLHYPATDIPQAARFLFKQNRVRMICDCNAQPVKVLQCEELKQPLCLVNSTLRSPHGCHTKYMANMGSIASLVMAVVINSSESMKLWGLVVCHHTSPRYVPFPLRYACEFLMQAFSLQLYMELQLASQLAEKKILQTQTLLCDMLLRDAPFGIVTQTPSIMDLVRCDGAALYYNGKCWLLGVTPTETQVKDIAEWLLHNHGDSTGLSTDCLSDAGYPGAPLLGDAVSGMATARITSKDFLFWFRSHTAKEVKWGGAKHHPEDKDDGGRMHPRSSFIAFLEVVKSRSLPWEDSEINAIHSLQLIMRDSLQGIGENYMKSVSSPQQNDSDGVRFYELSSMALELVRLVETATVPIFGVDSSGLINGWNAKIAELTGLQANVAIGKYLIDDVTHEDSHETFKALMCRALQGEEDRNVEVKLLKFGNHPTKEVVYLVVNACTSRDYKNDIIGVCFVGQDITPEKAVMDKFVRLQGDYEAIIQSLNPLIPPIFASDENACCSEWNAAMERLTGLVKCEVIGKRLPGEIFGGLCRLKGQDALTKFMILLYQGISGHDTEKLSFGFFDRKGNFIDVFITANKRTDERGNIIGCFCFLQTMAVDHPQISARDIEDDRECLSTLKEFAYIQQQMKNPLNGIRFTHKLLEGTVTSDHQKQFLETSEACEKQILSIIENMDSGGIVDGNRVELKTEEFVIGNVIDAVVSQVMIPLKEKNLQLLHDIPDQIKSLPIYGDQIKLQLVLSDFLLSIVRHAPSPDGWVEIRVSPGLKLIQDGNVFIHIQFRMTHPGQGLPSALIEDMVRGGTRWTTQEGVVLHLSQKLVRMMNGHVHYVREQQKCYFLIDLDFKTQKPRSRESSMDTKAD.

The GAF domain maps to 213-383; it reads DIGTLCDTVV…AFSLQLYMEL (171 aa). Cys-318 lines the phytochromobilin pocket. The region spanning 598–669 is the PAS 1 domain; the sequence is MALELVRLVE…ALMCRALQGE (72 aa). Residues 672 to 728 form the PAC domain; sequence RNVEVKLLKFGNHPTKEVVYLVVNACTSRDYKNDIIGVCFVGQDITPEKAVMDKFVR. A PAS 2 domain is found at 732–803; the sequence is DYEAIIQSLN…DALTKFMILL (72 aa). Residues 880–1100 enclose the Histidine kinase domain; it reads YIQQQMKNPL…YFLIDLDFKT (221 aa).

It belongs to the phytochrome family. In terms of assembly, homodimer. Contains one covalently linked phytochromobilin chromophore.

Regulatory photoreceptor which exists in two forms that are reversibly interconvertible by light: the Pr form that absorbs maximally in the red region of the spectrum and the Pfr form that absorbs maximally in the far-red region. Photoconversion of Pr to Pfr induces an array of morphogenic responses, whereas reconversion of Pfr to Pr cancels the induction of those responses. Pfr controls the expression of a number of nuclear genes including those encoding the small subunit of ribulose-bisphosphate carboxylase, chlorophyll A/B binding protein, protochlorophyllide reductase, rRNA, etc. It also controls the expression of its own gene(s) in a negative feedback fashion. The protein is Phytochrome E (PHYE) of Ipomoea nil (Japanese morning glory).